Reading from the N-terminus, the 268-residue chain is Indole-3-glycerol phosphate synthase (268 aa).

It belongs to the TrpC family.

It catalyses the reaction 1-(2-carboxyphenylamino)-1-deoxy-D-ribulose 5-phosphate + H(+) = (1S,2R)-1-C-(indol-3-yl)glycerol 3-phosphate + CO2 + H2O. Its pathway is amino-acid biosynthesis; L-tryptophan biosynthesis; L-tryptophan from chorismate: step 4/5. The sequence is that of Indole-3-glycerol phosphate synthase from Acinetobacter baumannii (strain ACICU).